The primary structure comprises 105 residues: Integration host factor (105 aa).

Residues 64–71 carry the H2TH motif, binds DNA motif; sequence LPKVGKVK. Positions 82-94 are lid, binds DNA; it reads APTRRLRGLGDRQ.

This sequence belongs to the actinobacterial IHF (aIHF) family. Homodimer in solution. Binds DNA as a monomer.

Its subcellular location is the cytoplasm. In terms of biological role, a nucleoid-associated protein (NAP) required for septum formation and normal cell division as well as for DNA segregation. Binds about 135 sites across the chromosome, most of which are genes involved in virulence; most DNA-binding sites are immediately upstream of transcription start sites. When mIHF is depleted most of the genes are down-regulated. Binds supercoiled and linear dsDNA in a concentration-dependent manner, probably non-sequence specifically. Binding compacts DNA, protecting it from degradation. Initial binding to supercoiled DNA opens it fully, followed by bending and compaction. Bends and thus compacts linear DNA. Binds DNA via 2 sites, forms left-handed loops on linear DNA; at low concentrations unwinds larger cosmids (42.6 kb) then collapses and condenses DNA as protein levels rise. Forms mostly left-handed loops on condensing cosmid DNA. The chain is Integration host factor from Mycobacterium tuberculosis (strain ATCC 25618 / H37Rv).